The chain runs to 82 residues: Translational regulator CsrA (82 aa).

This sequence belongs to the CsrA/RsmA family. Homodimer; the beta-strands of each monomer intercalate to form a hydrophobic core, while the alpha-helices form wings that extend away from the core.

It is found in the cytoplasm. Functionally, a translational regulator that binds mRNA to regulate translation initiation and/or mRNA stability. Usually binds in the 5'-UTR at or near the Shine-Dalgarno sequence preventing ribosome-binding, thus repressing translation. Its main target seems to be the major flagellin gene, while its function is anatagonized by FliW. The protein is Translational regulator CsrA of Geobacillus kaustophilus (strain HTA426).